The chain runs to 220 residues: ATP phosphoribosyltransferase (220 aa).

This sequence belongs to the ATP phosphoribosyltransferase family. Short subfamily. As to quaternary structure, heteromultimer composed of HisG and HisZ subunits.

It is found in the cytoplasm. The catalysed reaction is 1-(5-phospho-beta-D-ribosyl)-ATP + diphosphate = 5-phospho-alpha-D-ribose 1-diphosphate + ATP. Its pathway is amino-acid biosynthesis; L-histidine biosynthesis; L-histidine from 5-phospho-alpha-D-ribose 1-diphosphate: step 1/9. Its function is as follows. Catalyzes the condensation of ATP and 5-phosphoribose 1-diphosphate to form N'-(5'-phosphoribosyl)-ATP (PR-ATP). Has a crucial role in the pathway because the rate of histidine biosynthesis seems to be controlled primarily by regulation of HisG enzymatic activity. In Janthinobacterium sp. (strain Marseille) (Minibacterium massiliensis), this protein is ATP phosphoribosyltransferase.